A 112-amino-acid polypeptide reads, in one-letter code: Cuticle protein AM1239 (112 aa).

Positions 16–85 (DGNFNYRFET…FIPTDHPLPA (70 aa)) constitute a Chitin-binding type R&amp;R domain. The O-linked (HexNAc) threonine glycan is linked to Thr79.

As to expression, arthrodial membrane.

The sequence is that of Cuticle protein AM1239 from Cancer pagurus (Rock crab).